Consider the following 224-residue polypeptide: Peroxiredoxin-6 (224 aa).

Residues 5 to 169 (LLLGDEAPNF…ILRVVISLQL (165 aa)) enclose the Thioredoxin domain. Residues 31–40 (DSWGILFSHP) form a required and sufficient for targeting to lysosomes and lamellar bodies region. Threonine 44 carries the post-translational modification Phosphothreonine. The active-site Cysteine sulfenic acid (-SOH) intermediate; for peroxidase activity is cysteine 47. Residue lysine 63 is modified to N6-acetyllysine. A Phosphotyrosine modification is found at tyrosine 89. Aspartate 140 functions as the For phospholipase activity in the catalytic mechanism. Phosphothreonine; by MAPK is present on threonine 177. An N6-acetyllysine; alternate modification is found at lysine 209. At lysine 209 the chain carries N6-succinyllysine; alternate.

This sequence belongs to the peroxiredoxin family. Prx6 subfamily. In terms of assembly, homodimer. Interacts with GSTP1; mediates PRDX6 glutathionylation and regeneration. Interacts with APEX1. Interacts with STH. May interact with FAM168B. May interact with HTR2A. In terms of processing, irreversibly inactivated by overoxidation of Cys-47 to sulfinic acid (Cys-SO(2)H) and sulfonic acid (Cys-SO(3)H) forms upon oxidative stress. Phosphorylation at Thr-177 by MAP kinases increases the phospholipase activity of the enzyme. The phosphorylated form exhibits a greater lysophosphatidylcholine acyltransferase activity compared to the non-phosphorylated form.

It localises to the cytoplasm. The protein localises to the lysosome. It carries out the reaction a hydroperoxide + 2 glutathione = an alcohol + glutathione disulfide + H2O. It catalyses the reaction a 1,2-diacyl-sn-glycero-3-phosphocholine + H2O = a 1-acyl-sn-glycero-3-phosphocholine + a fatty acid + H(+). The catalysed reaction is a 1-acyl-sn-glycero-3-phosphocholine + an acyl-CoA = a 1,2-diacyl-sn-glycero-3-phosphocholine + CoA. The enzyme catalyses 1-hexadecanoyl-sn-glycero-3-phosphocholine + hexadecanoyl-CoA = 1,2-dihexadecanoyl-sn-glycero-3-phosphocholine + CoA. It carries out the reaction 1,2-dihexadecanoyl-sn-glycero-3-phosphocholine + H2O = 1-hexadecanoyl-sn-glycero-3-phosphocholine + hexadecanoate + H(+). Its function is as follows. Thiol-specific peroxidase that catalyzes the reduction of hydrogen peroxide and organic hydroperoxides to water and alcohols, respectively. Can reduce H(2)O(2) and short chain organic, fatty acid, and phospholipid hydroperoxides. Also has phospholipase activity, and can therefore either reduce the oxidized sn-2 fatty acyl group of phospholipids (peroxidase activity) or hydrolyze the sn-2 ester bond of phospholipids (phospholipase activity). These activities are dependent on binding to phospholipids at acidic pH and to oxidized phospholipds at cytosolic pH. Plays a role in cell protection against oxidative stress by detoxifying peroxides and in phospholipid homeostasis. Exhibits acyl-CoA-dependent lysophospholipid acyltransferase which mediates the conversion of lysophosphatidylcholine (1-acyl-sn-glycero-3-phosphocholine or LPC) into phosphatidylcholine (1,2-diacyl-sn-glycero-3-phosphocholine or PC). Shows a clear preference for LPC as the lysophospholipid and for palmitoyl CoA as the fatty acyl substrate. This is Peroxiredoxin-6 (PRDX6) from Macaca fascicularis (Crab-eating macaque).